Here is a 318-residue protein sequence, read N- to C-terminus: Protein W (318 aa).

Disordered stretches follow at residues Met1–Glu23 and Ile54–Ala318. Composition is skewed to basic and acidic residues over residues Ile7 to Gly20, Ala99 to Asn110, Gly150 to Asp168, and Glu175 to Asn193. Phosphoserine; by host occurs at positions 249, 257, and 260.

The polypeptide is Protein W (P/V/C) (Sendai virus (strain Ohita) (SeV)).